The following is a 575-amino-acid chain: Membrane protein insertase YidC (575 aa).

6 consecutive transmembrane segments (helical) span residues 6–26, 357–377, 381–401, 448–468, 490–510, and 526–546; these read VFLI…WGKD, FSIM…LHSF, WGWA…PLSA, GGCL…WVLV, PYFI…KLTP, and PLVF…YWVV.

Belongs to the OXA1/ALB3/YidC family. Type 1 subfamily. In terms of assembly, interacts with the Sec translocase complex via SecD. Specifically interacts with transmembrane segments of nascent integral membrane proteins during membrane integration.

Its subcellular location is the cell inner membrane. In terms of biological role, required for the insertion and/or proper folding and/or complex formation of integral membrane proteins into the membrane. Involved in integration of membrane proteins that insert both dependently and independently of the Sec translocase complex, as well as at least some lipoproteins. Aids folding of multispanning membrane proteins. This Xanthomonas campestris pv. campestris (strain B100) protein is Membrane protein insertase YidC.